A 444-amino-acid chain; its full sequence is Multidrug resistance protein MdtA (444 aa).

The N-terminal stretch at 1–20 (MKSQSKRTSRLFVFVGGVVA) is a signal peptide. Over residues 37 to 52 (NNTSGAQQSARGQDTS) the composition is skewed to polar residues. 2 disordered regions span residues 37–60 (NNTS…RNTP) and 398–444 (TPRS…AEKS). The span at 406-419 (ANPASAEKAAAEAE) shows a compositional bias: low complexity. Residues 435 to 444 (ARSTTAAEKS) are compositionally biased toward polar residues.

Belongs to the membrane fusion protein (MFP) (TC 8.A.1) family. Part of a tripartite efflux system composed of MdtA, MdtB and MdtC.

The protein resides in the cell inner membrane. This Yersinia pseudotuberculosis serotype O:1b (strain IP 31758) protein is Multidrug resistance protein MdtA.